The primary structure comprises 78 residues: Sec-independent protein translocase protein TatA (78 aa).

Residues 1 to 21 (MGSLSIWHWIVVIAVVLLLFG) form a helical membrane-spanning segment. Basic and acidic residues predominate over residues 43–60 (LQDDEKTAEKSEPVKSID). Positions 43 to 78 (LQDDEKTAEKSEPVKSIDHTSTPGATNRTDVGSKAV) are disordered. The span at 61–72 (HTSTPGATNRTD) shows a compositional bias: polar residues.

The protein belongs to the TatA/E family. As to quaternary structure, the Tat system comprises two distinct complexes: a TatABC complex, containing multiple copies of TatA, TatB and TatC subunits, and a separate TatA complex, containing only TatA subunits. Substrates initially bind to the TatABC complex, which probably triggers association of the separate TatA complex to form the active translocon.

Its subcellular location is the cell inner membrane. Functionally, part of the twin-arginine translocation (Tat) system that transports large folded proteins containing a characteristic twin-arginine motif in their signal peptide across membranes. TatA could form the protein-conducting channel of the Tat system. The polypeptide is Sec-independent protein translocase protein TatA (Rhodopseudomonas palustris (strain ATCC BAA-98 / CGA009)).